We begin with the raw amino-acid sequence, 394 residues long: Phosphoglycerate kinase (394 aa).

Substrate contacts are provided by residues 21–23, R36, 59–62, R118, and R151; these read DFN and HFGR. ATP-binding positions include K201, E323, and 349–352; that span reads GGDS.

Belongs to the phosphoglycerate kinase family. As to quaternary structure, monomer.

Its subcellular location is the cytoplasm. It carries out the reaction (2R)-3-phosphoglycerate + ATP = (2R)-3-phospho-glyceroyl phosphate + ADP. It participates in carbohydrate degradation; glycolysis; pyruvate from D-glyceraldehyde 3-phosphate: step 2/5. In Brevibacillus brevis (strain 47 / JCM 6285 / NBRC 100599), this protein is Phosphoglycerate kinase.